A 277-amino-acid chain; its full sequence is Formamidopyrimidine-DNA glycosylase (277 aa).

Pro2 acts as the Schiff-base intermediate with DNA in catalysis. Glu3 acts as the Proton donor in catalysis. The active-site Proton donor; for beta-elimination activity is Lys58. Residues His94, Arg113, and Arg156 each contribute to the DNA site. Residues Leu241–Lys277 form an FPG-type zinc finger. Residue Arg267 is the Proton donor; for delta-elimination activity of the active site.

This sequence belongs to the FPG family. In terms of assembly, monomer. Zn(2+) serves as cofactor.

The catalysed reaction is Hydrolysis of DNA containing ring-opened 7-methylguanine residues, releasing 2,6-diamino-4-hydroxy-5-(N-methyl)formamidopyrimidine.. It carries out the reaction 2'-deoxyribonucleotide-(2'-deoxyribose 5'-phosphate)-2'-deoxyribonucleotide-DNA = a 3'-end 2'-deoxyribonucleotide-(2,3-dehydro-2,3-deoxyribose 5'-phosphate)-DNA + a 5'-end 5'-phospho-2'-deoxyribonucleoside-DNA + H(+). Involved in base excision repair of DNA damaged by oxidation or by mutagenic agents. Acts as a DNA glycosylase that recognizes and removes damaged bases. Has a preference for oxidized purines, such as 7,8-dihydro-8-oxoguanine (8-oxoG). Has AP (apurinic/apyrimidinic) lyase activity and introduces nicks in the DNA strand. Cleaves the DNA backbone by beta-delta elimination to generate a single-strand break at the site of the removed base with both 3'- and 5'-phosphates. This chain is Formamidopyrimidine-DNA glycosylase, found in Gluconobacter oxydans (strain 621H) (Gluconobacter suboxydans).